Consider the following 138-residue polypeptide: ATP synthase epsilon chain (138 aa).

The protein belongs to the ATPase epsilon chain family. F-type ATPases have 2 components, CF(1) - the catalytic core - and CF(0) - the membrane proton channel. CF(1) has five subunits: alpha(3), beta(3), gamma(1), delta(1), epsilon(1). CF(0) has three main subunits: a, b and c.

The protein resides in the cell inner membrane. Its function is as follows. Produces ATP from ADP in the presence of a proton gradient across the membrane. The chain is ATP synthase epsilon chain from Cupriavidus pinatubonensis (strain JMP 134 / LMG 1197) (Cupriavidus necator (strain JMP 134)).